Consider the following 77-residue polypeptide: Tachyplesin-1 (77 aa).

A signal peptide spans 1–23 (MKKLVIALCLMMVLAVMVEEAEA). Intrachain disulfides connect Cys26/Cys39 and Cys30/Cys35. Arg40 carries the arginine amide modification. The propeptide occupies 41 to 77 (GKRNEVRQYRDRGYDVRAIPEETFFTRQDEDEDDDEE).

The protein belongs to the tachyplesin/polyphemusin family. In terms of tissue distribution, hemocytes.

The protein resides in the secreted. Significantly inhibits the growth of Gram-negative and Gram-positive bacteria. In Tachypleus tridentatus (Japanese horseshoe crab), this protein is Tachyplesin-1.